We begin with the raw amino-acid sequence, 309 residues long: 4-hydroxy-3-methylbut-2-enyl diphosphate reductase (309 aa).

Position 13 (C13) interacts with [4Fe-4S] cluster. Residues H42 and H75 each contribute to the (2E)-4-hydroxy-3-methylbut-2-enyl diphosphate site. Dimethylallyl diphosphate-binding residues include H42 and H75. The isopentenyl diphosphate site is built by H42 and H75. Residue C97 coordinates [4Fe-4S] cluster. H125 contacts (2E)-4-hydroxy-3-methylbut-2-enyl diphosphate. H125 provides a ligand contact to dimethylallyl diphosphate. H125 contributes to the isopentenyl diphosphate binding site. E127 acts as the Proton donor in catalysis. T165 contacts (2E)-4-hydroxy-3-methylbut-2-enyl diphosphate. C195 provides a ligand contact to [4Fe-4S] cluster. Positions 223, 224, 225, and 267 each coordinate (2E)-4-hydroxy-3-methylbut-2-enyl diphosphate. Residues S223, S224, N225, and S267 each contribute to the dimethylallyl diphosphate site. Isopentenyl diphosphate contacts are provided by S223, S224, N225, and S267.

It belongs to the IspH family. [4Fe-4S] cluster serves as cofactor.

The enzyme catalyses isopentenyl diphosphate + 2 oxidized [2Fe-2S]-[ferredoxin] + H2O = (2E)-4-hydroxy-3-methylbut-2-enyl diphosphate + 2 reduced [2Fe-2S]-[ferredoxin] + 2 H(+). It carries out the reaction dimethylallyl diphosphate + 2 oxidized [2Fe-2S]-[ferredoxin] + H2O = (2E)-4-hydroxy-3-methylbut-2-enyl diphosphate + 2 reduced [2Fe-2S]-[ferredoxin] + 2 H(+). It functions in the pathway isoprenoid biosynthesis; dimethylallyl diphosphate biosynthesis; dimethylallyl diphosphate from (2E)-4-hydroxy-3-methylbutenyl diphosphate: step 1/1. Its pathway is isoprenoid biosynthesis; isopentenyl diphosphate biosynthesis via DXP pathway; isopentenyl diphosphate from 1-deoxy-D-xylulose 5-phosphate: step 6/6. Its function is as follows. Catalyzes the conversion of 1-hydroxy-2-methyl-2-(E)-butenyl 4-diphosphate (HMBPP) into a mixture of isopentenyl diphosphate (IPP) and dimethylallyl diphosphate (DMAPP). Acts in the terminal step of the DOXP/MEP pathway for isoprenoid precursor biosynthesis. The polypeptide is 4-hydroxy-3-methylbut-2-enyl diphosphate reductase (Chlamydia abortus (strain DSM 27085 / S26/3) (Chlamydophila abortus)).